The chain runs to 152 residues: Large ribosomal subunit protein eL14 (152 aa).

It belongs to the eukaryotic ribosomal protein eL14 family.

The chain is Large ribosomal subunit protein eL14 (RPL14) from Lumbricus rubellus (Humus earthworm).